A 203-amino-acid polypeptide reads, in one-letter code: Small ribosomal subunit protein uS4 (203 aa).

Residues 93 to 156 (RRLDNVVYRL…LKVPAILEAV (64 aa)) form the S4 RNA-binding domain.

The protein belongs to the universal ribosomal protein uS4 family. As to quaternary structure, part of the 30S ribosomal subunit. Contacts protein S5. The interaction surface between S4 and S5 is involved in control of translational fidelity.

In terms of biological role, one of the primary rRNA binding proteins, it binds directly to 16S rRNA where it nucleates assembly of the body of the 30S subunit. Its function is as follows. With S5 and S12 plays an important role in translational accuracy. This is Small ribosomal subunit protein uS4 from Streptococcus sanguinis (strain SK36).